Here is a 318-residue protein sequence, read N- to C-terminus: Mevalonate 3-kinase (318 aa).

Substrate is bound at residue L19. ATP is bound by residues 96–100 and 105–108; these read YSSQN and SGSS. 2 residues coordinate substrate: E140 and R144. Residues R185 and S188 each coordinate ATP.

Belongs to the GHMP kinase family. In terms of assembly, homodimer.

The enzyme catalyses (R)-mevalonate + ATP = (R)-3-phosphomevalonate + ADP + H(+). It functions in the pathway isoprenoid biosynthesis; isopentenyl diphosphate biosynthesis via mevalonate pathway. Its function is as follows. Catalyzes the phosphorylation of mevalonate (MVA) to yield mevalonate-3-phosphate. Functions in an alternative mevalonate pathway, only present in extreme acidophiles of the Thermoplasmatales order, which passes through mevalonate 3-phosphate rather than mevalonate 5-phosphate. In Thermoplasma acidophilum (strain ATCC 25905 / DSM 1728 / JCM 9062 / NBRC 15155 / AMRC-C165), this protein is Mevalonate 3-kinase.